The chain runs to 221 residues: Endo-1,4-beta-xylanase I (221 aa).

Positions Met-1–Arg-30 are cleaved as a signal peptide. Positions Gln-31–Asn-219 constitute a GH11 domain. The active-site Nucleophile is the Glu-115. Residues Asp-126–Ile-157 are disordered. Catalysis depends on Glu-206, which acts as the Proton donor.

Belongs to the glycosyl hydrolase 11 (cellulase G) family. The N-terminus is blocked.

It is found in the secreted. The enzyme catalyses Endohydrolysis of (1-&gt;4)-beta-D-xylosidic linkages in xylans.. It participates in glycan degradation; xylan degradation. Functionally, major xylan-degrading enzyme. Contributes to the hydrolysis of arabinoxylan, the major component of maize cell-walls. In Cochliobolus carbonum (Maize leaf spot fungus), this protein is Endo-1,4-beta-xylanase I (XYL1).